A 237-amino-acid polypeptide reads, in one-letter code: Probable GTP-binding protein EngB (237 aa).

One can recognise an EngB-type G domain in the interval 13-188 (TGYEIAFAGR…ASVMAGRLNY (176 aa)). Residues 21 to 28 (GRSNAGKS), 48 to 52 (GRTQM), 67 to 70 (DLPG), 134 to 137 (TKAD), and 167 to 169 (FSS) each bind GTP. Mg(2+) is bound by residues Ser28 and Thr50. The segment covering 207–220 (DDLNDELMDQDETS) has biased composition (acidic residues). Positions 207–237 (DDLNDELMDQDETSEFNTENIDDHLDQEPKI) are disordered. A compositionally biased stretch (basic and acidic residues) spans 227–237 (IDDHLDQEPKI).

It belongs to the TRAFAC class TrmE-Era-EngA-EngB-Septin-like GTPase superfamily. EngB GTPase family. Requires Mg(2+) as cofactor.

In terms of biological role, necessary for normal cell division and for the maintenance of normal septation. The sequence is that of Probable GTP-binding protein EngB from Acinetobacter baylyi (strain ATCC 33305 / BD413 / ADP1).